Here is a 347-residue protein sequence, read N- to C-terminus: MDDQPRLMHSHPGVGMAGHPSLSQHMQDGTGANEGDVGRKQDIGDILQQIMTITDQSLDEAQARKHALNCHRMKPALFNVLCEIKEKTVLSIRGAQEEEPSDPQLMRLDNMLLAEGVAGPEKGGGSAAAAAAAAASGGAGADNSTEHSDYRAKLSQIRQIYHTELEKYEQACNEFTTHVMNLLREQSRTRPISPKEIERMVSIIHRKFSSIQMQLKQSTCEAVMILRSRFLDARRKRRNFNKQATEILNEYFYSHLSNPYPSEEAKEELAKKCAITVSQVSNWFGNKRIRYKKNIGKFQEEANIYAAKTAVNATNVSVHGSQANSPSTPSSAGGYPSPCYQSDRRIQ.

Residues 1 to 37 are disordered; that stretch reads MDDQPRLMHSHPGVGMAGHPSLSQHMQDGTGANEGDV. Residues 38-232 enclose the PBC domain; the sequence is GRKQDIGDIL…VMILRSRFLD (195 aa). The segment at 45 to 124 is PBC-A; sequence DILQQIMTIT…EGVAGPEKGG (80 aa). The interval 127–232 is PBC-B; sequence AAAAAAAAAS…VMILRSRFLD (106 aa). The segment at residues 233–295 is a DNA-binding region (homeobox; TALE-type); sequence ARRKRRNFNK…NKRIRYKKNI (63 aa). Positions 318–331 are enriched in polar residues; that stretch reads VHGSQANSPSTPSS. The tract at residues 318 to 347 is disordered; sequence VHGSQANSPSTPSSAGGYPSPCYQSDRRIQ.

This sequence belongs to the TALE/PBX homeobox family. In terms of assembly, forms a heterodimer with isoform 2 of meis1; the interaction is necessary for neural fate induction. Shows broad, weak expression from blastula through gastrula stages. At stage 14/15, expressed in a broad arc that gives rise to the forebrain and eyes. More intensely expressed in the lateral neural folds (presumptive neural crest) and as horizontal stripes in the posterior neural plate that give rise to the hindbrain. As development proceeds, expression progresses posteriorly along the neural folds and at stage 21, expression is pronounced in the prospective hindbrain and in migratory neural crest cells. At later stages (stage 26), expression becomes intense within the dorsal portion of the forebrain, and in the optic cup, caudal branchial arch, peripheral to the pronephric anlage, and in the dorsal anterior half of the spinal cord. Expression remains robust in the hindbrain but gradually becomes more restricted. At stage 28, expressed in the dorsal lateral portion of the neural tube and in the somatic layer of the lateral plate mesoderm that surrounds the pronephric anlage.

Its subcellular location is the nucleus. Functionally, acts as a transcriptional activator in complex with isoform 2 of meis1, to induce posterior neural and neural crest gene expression, and thereby specify hindbrain and neural crest cell fate. Binds to a highly conserved region in the promoter of the neural crest gene zic3. Required for the nuclear transport or retention of isoform 2 of meis1. The protein is Pre-B-cell leukemia transcription factor 1 (pbx1) of Xenopus laevis (African clawed frog).